Here is a 273-residue protein sequence, read N- to C-terminus: 2,3,4,5-tetrahydropyridine-2,6-dicarboxylate N-succinyltransferase (273 aa).

Substrate contacts are provided by Arg-106 and Asp-143.

This sequence belongs to the transferase hexapeptide repeat family. In terms of assembly, homotrimer.

It localises to the cytoplasm. The enzyme catalyses (S)-2,3,4,5-tetrahydrodipicolinate + succinyl-CoA + H2O = (S)-2-succinylamino-6-oxoheptanedioate + CoA. It participates in amino-acid biosynthesis; L-lysine biosynthesis via DAP pathway; LL-2,6-diaminopimelate from (S)-tetrahydrodipicolinate (succinylase route): step 1/3. The protein is 2,3,4,5-tetrahydropyridine-2,6-dicarboxylate N-succinyltransferase of Wolbachia sp. subsp. Brugia malayi (strain TRS).